A 153-amino-acid polypeptide reads, in one-letter code: NAD(P)H-quinone oxidoreductase subunit N (153 aa).

Belongs to the complex I NdhN subunit family. As to quaternary structure, NDH-1 can be composed of about 15 different subunits; different subcomplexes with different compositions have been identified which probably have different functions.

It localises to the cellular thylakoid membrane. The enzyme catalyses a plastoquinone + NADH + (n+1) H(+)(in) = a plastoquinol + NAD(+) + n H(+)(out). The catalysed reaction is a plastoquinone + NADPH + (n+1) H(+)(in) = a plastoquinol + NADP(+) + n H(+)(out). Its function is as follows. NDH-1 shuttles electrons from an unknown electron donor, via FMN and iron-sulfur (Fe-S) centers, to quinones in the respiratory and/or the photosynthetic chain. The immediate electron acceptor for the enzyme in this species is believed to be plastoquinone. Couples the redox reaction to proton translocation, and thus conserves the redox energy in a proton gradient. Cyanobacterial NDH-1 also plays a role in inorganic carbon-concentration. The sequence is that of NAD(P)H-quinone oxidoreductase subunit N from Synechococcus sp. (strain CC9605).